The following is a 317-amino-acid chain: uncharacterized protein (317 aa).

Residues 11 to 31 traverse the membrane as a helical segment; that stretch reads ALLLVIFGSLIVSFAIFFMVL. PASTA domains follow at residues 33–100, 101–174, and 180–241; these read NNEI…FISK, GAII…LISK, and DKHV…TIAK.

It is found in the membrane. This is an uncharacterized protein from Borreliella burgdorferi (strain ATCC 35210 / DSM 4680 / CIP 102532 / B31) (Borrelia burgdorferi).